Here is a 307-residue protein sequence, read N- to C-terminus: Membrane protein insertase YidC 2 (307 aa).

A signal peptide spans 1-23; it reads MKLTLNRILFSGLALSILFTLTG. Residue Cys-24 is the site of N-palmitoyl cysteine attachment. The S-diacylglycerol cysteine moiety is linked to residue Cys-24. 5 helical membrane passes run 58–78, 135–155, 179–199, 209–225, and 231–251; these read LGYG…ILPL, LGGI…AMYF, VLTA…MMAV, TMMY…SFSL, and LYWL…TYLL. A disordered region spans residues 263–307; the sequence is YAKNPPKAYQSTSSRKDVTPSQNMEQANLPKKIKSNRNAGKQRKR. The span at 271–288 shows a compositional bias: polar residues; sequence YQSTSSRKDVTPSQNMEQ. The span at 293-307 shows a compositional bias: basic residues; sequence KKIKSNRNAGKQRKR.

Belongs to the OXA1/ALB3/YidC family. Type 2 subfamily.

Its subcellular location is the cell membrane. Required for the insertion and/or proper folding and/or complex formation of integral membrane proteins into the membrane. Involved in integration of membrane proteins that insert both dependently and independently of the Sec translocase complex, as well as at least some lipoproteins. The polypeptide is Membrane protein insertase YidC 2 (Streptococcus pyogenes serotype M3 (strain ATCC BAA-595 / MGAS315)).